The primary structure comprises 472 residues: Ribulose bisphosphate carboxylase/oxygenase activase, chloroplastic (472 aa).

A chloroplast-targeting transit peptide spans 1–58 (MATAVSTVGAATRAPLNLNGSSAGASVPTSGFLGSSLKKHTNVRFPSSSRTTSMTVKA). 163–170 (GGKGQGKS) lines the ATP pocket. The disordered stretch occupies residues 448-472 (GCTDPEAKNYDPTARSDDGSCTYNL). Positions 452 to 465 (PEAKNYDPTARSDD) are enriched in basic and acidic residues.

Belongs to the RuBisCO activase family.

Its subcellular location is the plastid. The protein localises to the chloroplast stroma. Functionally, activation of RuBisCO (ribulose-1,5-bisphosphate carboxylase/oxygenase; EC 4.1.1.39) involves the ATP-dependent carboxylation of the epsilon-amino group of lysine leading to a carbamate structure. The polypeptide is Ribulose bisphosphate carboxylase/oxygenase activase, chloroplastic (Spinacia oleracea (Spinach)).